Consider the following 262-residue polypeptide: uncharacterized protein (262 aa).

A divalent metal cation-binding residues include histidine 7, histidine 9, glutamate 98, histidine 138, histidine 162, and aspartate 212.

Belongs to the metallo-dependent hydrolases superfamily. TatD-type hydrolase family. A divalent metal cation is required as a cofactor.

This is an uncharacterized protein from Haemophilus influenzae (strain ATCC 51907 / DSM 11121 / KW20 / Rd).